Here is a 335-residue protein sequence, read N- to C-terminus: Biotin synthase (335 aa).

The 229-residue stretch at tyrosine 46–arginine 274 folds into the Radical SAM core domain. [4Fe-4S] cluster contacts are provided by cysteine 61, cysteine 65, and cysteine 68. 4 residues coordinate [2Fe-2S] cluster: cysteine 105, cysteine 137, cysteine 197, and arginine 269.

This sequence belongs to the radical SAM superfamily. Biotin synthase family. As to quaternary structure, homodimer. Requires [4Fe-4S] cluster as cofactor. [2Fe-2S] cluster serves as cofactor.

It catalyses the reaction (4R,5S)-dethiobiotin + (sulfur carrier)-SH + 2 reduced [2Fe-2S]-[ferredoxin] + 2 S-adenosyl-L-methionine = (sulfur carrier)-H + biotin + 2 5'-deoxyadenosine + 2 L-methionine + 2 oxidized [2Fe-2S]-[ferredoxin]. It participates in cofactor biosynthesis; biotin biosynthesis; biotin from 7,8-diaminononanoate: step 2/2. Functionally, catalyzes the conversion of dethiobiotin (DTB) to biotin by the insertion of a sulfur atom into dethiobiotin via a radical-based mechanism. The sequence is that of Biotin synthase from Prochlorococcus marinus (strain MIT 9301).